The primary structure comprises 99 residues: Small integral membrane protein 14 (99 aa).

Over 1–49 (MAEGGFDPCECICSHEHAMRRLINLLRQSQSYCTDTECLRELPGPSGDS) the chain is Lumenal. The helical transmembrane segment at 50-70 (GISITVILMAWMVIAVLLFLL) threads the bilayer. The Cytoplasmic segment spans residues 71 to 99 (RPPNLRGSSLPGKPSSPHSGQDPPAPPVD). The segment at 77–99 (GSSLPGKPSSPHSGQDPPAPPVD) is disordered.

The protein resides in the endoplasmic reticulum membrane. This is Small integral membrane protein 14 (Smim14) from Rattus norvegicus (Rat).